Here is a 1259-residue protein sequence, read N- to C-terminus: uncharacterized protein (1259 aa).

A disordered region spans residues 354 to 410 (KLNQAGGKRNSSMNNSTQNNNSSRSNNSARNNNSVWNNNNSAWKNNNSAWNDNSSWK). Positions 362–410 (RNSSMNNSTQNNNSSRSNNSARNNNSVWNNNNSAWKNNNSAWNDNSSWK) are enriched in low complexity.

The protein resides in the virion. This is an uncharacterized protein from Acanthamoeba polyphaga (Amoeba).